We begin with the raw amino-acid sequence, 87 residues long: Defensin-like protein 176 (87 aa).

The first 23 residues, 1 to 23 (MAKATSSLVVPIIFLVIFALVEQ), serve as a signal peptide directing secretion. Cystine bridges form between C27–C66, C36–C55, C39–C60, and C43–C62.

This sequence belongs to the DEFL family.

It localises to the secreted. The protein is Defensin-like protein 176 (LCR65) of Arabidopsis thaliana (Mouse-ear cress).